Consider the following 351-residue polypeptide: Heat-inducible transcription repressor HrcA (351 aa).

It belongs to the HrcA family.

Its function is as follows. Negative regulator of class I heat shock genes (grpE-dnaK-dnaJ and groELS operons). Prevents heat-shock induction of these operons. The chain is Heat-inducible transcription repressor HrcA from Acetivibrio thermocellus (strain ATCC 27405 / DSM 1237 / JCM 9322 / NBRC 103400 / NCIMB 10682 / NRRL B-4536 / VPI 7372) (Clostridium thermocellum).